A 536-amino-acid chain; its full sequence is CTP synthase (536 aa).

An amidoligase domain region spans residues 1-268 (MSTKYVFVTG…DNLVCEKLHL (268 aa)). A CTP-binding site is contributed by S14. S14 contacts UTP. 15–20 (ALGKGI) serves as a coordination point for ATP. Y55 is a binding site for L-glutamine. An ATP-binding site is contributed by D72. Residues D72 and E142 each contribute to the Mg(2+) site. CTP contacts are provided by residues 149–151 (DIE), 189–194 (KTKPTQ), and K225. Residues 189–194 (KTKPTQ) and K225 each bind UTP. The Glutamine amidotransferase type-1 domain maps to 293-535 (KIALVGKYVE…IKAALEENKS (243 aa)). Residue G355 participates in L-glutamine binding. C382 (nucleophile; for glutamine hydrolysis) is an active-site residue. Residues 383-386 (LGMQ), E406, and R463 each bind L-glutamine. Catalysis depends on residues H508 and E510.

It belongs to the CTP synthase family. In terms of assembly, homotetramer.

It catalyses the reaction UTP + L-glutamine + ATP + H2O = CTP + L-glutamate + ADP + phosphate + 2 H(+). The catalysed reaction is L-glutamine + H2O = L-glutamate + NH4(+). It carries out the reaction UTP + NH4(+) + ATP = CTP + ADP + phosphate + 2 H(+). It participates in pyrimidine metabolism; CTP biosynthesis via de novo pathway; CTP from UDP: step 2/2. Allosterically activated by GTP, when glutamine is the substrate; GTP has no effect on the reaction when ammonia is the substrate. The allosteric effector GTP functions by stabilizing the protein conformation that binds the tetrahedral intermediate(s) formed during glutamine hydrolysis. Inhibited by the product CTP, via allosteric rather than competitive inhibition. Catalyzes the ATP-dependent amination of UTP to CTP with either L-glutamine or ammonia as the source of nitrogen. Regulates intracellular CTP levels through interactions with the four ribonucleotide triphosphates. The polypeptide is CTP synthase (Clostridium beijerinckii (strain ATCC 51743 / NCIMB 8052) (Clostridium acetobutylicum)).